Reading from the N-terminus, the 679-residue chain is Biosynthetic arginine decarboxylase (679 aa).

The tract at residues 1–43 (MKHRGQEEMGVESTATSDEVVKVPANGNKLEGKNHKQKKLLPT) is disordered. An N6-(pyridoxal phosphate)lysine modification is found at lysine 149. Residue 331 to 341 (LDVGGGLGVDY) participates in substrate binding.

The protein belongs to the Orn/Lys/Arg decarboxylase class-II family. SpeA subfamily. Mg(2+) is required as a cofactor. Requires pyridoxal 5'-phosphate as cofactor.

It carries out the reaction L-arginine + H(+) = agmatine + CO2. In terms of biological role, catalyzes the biosynthesis of agmatine from arginine. In Nostoc sp. (strain PCC 7120 / SAG 25.82 / UTEX 2576), this protein is Biosynthetic arginine decarboxylase.